Consider the following 100-residue polypeptide: MHLSPQEKDKLLIVTAALLAERRLNRGLRLNHPEAVAWLSFLVIEGARDGQSVAELMAEGSTWLRRDQVMDGVPELIPEVQIEAVFKDGTKLVTLHDPIR.

This sequence belongs to the urease gamma subunit family. Heterotrimer of UreA (gamma), UreB (beta) and UreC (alpha) subunits. Three heterotrimers associate to form the active enzyme.

The protein resides in the cytoplasm. It catalyses the reaction urea + 2 H2O + H(+) = hydrogencarbonate + 2 NH4(+). The protein operates within nitrogen metabolism; urea degradation; CO(2) and NH(3) from urea (urease route): step 1/1. This Prochlorococcus marinus (strain MIT 9313) protein is Urease subunit gamma.